A 609-amino-acid polypeptide reads, in one-letter code: Chaperone protein DnaK (609 aa).

Residue Thr-173 is modified to Phosphothreonine; by autocatalysis. The segment at 580–609 is disordered; the sequence is QAAQGGGAEGQEPKKDNVVDADYEVVDDKK. Residues 598–609 are compositionally biased toward acidic residues; it reads VDADYEVVDDKK.

The protein belongs to the heat shock protein 70 family.

In terms of biological role, acts as a chaperone. This Brevibacillus brevis (strain 47 / JCM 6285 / NBRC 100599) protein is Chaperone protein DnaK.